Reading from the N-terminus, the 292-residue chain is Zinc finger protein OZF (292 aa).

C2H2-type zinc fingers lie at residues 16-38 (FACK…EHFH), 44-66 (FECN…QNTH), 72-94 (LECN…QKIH), 100-122 (FECK…QRTH), 128-150 (FICK…EKIH), 156-178 (FKCN…QNIH), 184-206 (YECN…VRIH), 212-234 (YECN…VRSH), 240-262 (YGCN…LRIH), and 268-290 (YQCS…QKIH). Glycyl lysine isopeptide (Lys-Gly) (interchain with G-Cter in SUMO2) cross-links involve residues lysine 28, lysine 51, and lysine 56. Residues lysine 157 and lysine 169 each participate in a glycyl lysine isopeptide (Lys-Gly) (interchain with G-Cter in SUMO) cross-link. Lysine 173 is covalently cross-linked (Glycyl lysine isopeptide (Lys-Gly) (interchain with G-Cter in SUMO2)). Residues 212–292 (YECNVCGKAF…HIRHQKIHTH (81 aa)) are interaction with TERF2IP.

It belongs to the krueppel C2H2-type zinc-finger protein family. In terms of assembly, binds DNA. Interacts with SUMO conjugating enzyme UBC9/UBE2I. Interacts with the telomeric protein TERF2IP.

The protein localises to the nucleus. This is Zinc finger protein OZF (ZNF146) from Bos taurus (Bovine).